The chain runs to 599 residues: Elongation factor 4 (599 aa).

The tr-type G domain occupies 5 to 187 (SHIRNFSIIA…RLVTTIPAPT (183 aa)). Residues 17 to 22 (DHGKST) and 134 to 137 (NKID) contribute to the GTP site.

This sequence belongs to the TRAFAC class translation factor GTPase superfamily. Classic translation factor GTPase family. LepA subfamily.

The protein resides in the cell inner membrane. It catalyses the reaction GTP + H2O = GDP + phosphate + H(+). Its function is as follows. Required for accurate and efficient protein synthesis under certain stress conditions. May act as a fidelity factor of the translation reaction, by catalyzing a one-codon backward translocation of tRNAs on improperly translocated ribosomes. Back-translocation proceeds from a post-translocation (POST) complex to a pre-translocation (PRE) complex, thus giving elongation factor G a second chance to translocate the tRNAs correctly. Binds to ribosomes in a GTP-dependent manner. The sequence is that of Elongation factor 4 from Pseudomonas fluorescens (strain ATCC BAA-477 / NRRL B-23932 / Pf-5).